We begin with the raw amino-acid sequence, 492 residues long: Catalase isozyme B (492 aa).

A disordered region spans residues 1-20 (MDPYKHRPSSGSNSTFWTTN). Positions 9 to 20 (SSGSNSTFWTTN) are enriched in polar residues. Residue R62 coordinates heme. H65 is an active-site residue. R102 is a binding site for heme. Residue N138 is part of the active site. Residue F151 coordinates heme. Residue Y210 is modified to Phosphotyrosine. A cross-link (3-(S-cysteinyl)-tyrosine (Cys-Tyr)) is located at residues 325–348 (CPAIIVPGIHYSDDKLLQTRIFSY). Heme contacts are provided by R344, Y348, and R355. The Peroxisome targeting signal signature appears at 484–492 (SRLNLKPNM).

This sequence belongs to the catalase family. In terms of assembly, homotetramer. Interacts with GLO1 and GLO4; these interactions are disturbed by alpha-hydroxy-2-pyridinemethanesulfonic acid (HPMS) and salicylic acid (SA). Interacts with STRK1 at the plasma membrane. Requires heme as cofactor. In terms of tissue distribution, predominantly expressed in roots and, at low levels, in leaves (e.g. sheaths). Detected in seeds. Also present in panicles and culms. Observed in stems and anthers.

Its subcellular location is the peroxisome. It is found in the glyoxysome. The protein resides in the cell membrane. The catalysed reaction is 2 H2O2 = O2 + 2 H2O. Strongly inhibited by beta-mercaptoethanol, sodium azide and potassium cyanide. Slightly repressed by 3-amino-1,2,4-triazole (3-AT). Activity is repressed proportionally to increased concentration of NaCl, KCl, LiCl and MgCl(2). Its function is as follows. Occurs in almost all aerobically respiring organisms and serves to protect cells from the toxic effects of hydrogen peroxide. May prevent the excessive accumulation of H(2)O(2) during water stress in response to the accumulation of abscisic acid (ABA). Involved in the modulation of ROS levels related to root growth regulation. Required for pollen viability and floret fertility upon heat stress (HS) by detoxifying reactive oxygen species (ROS) and malondialdehyde (MDA) accumulation in developing anthers exposed to HS. The chain is Catalase isozyme B (CATB) from Oryza sativa subsp. japonica (Rice).